A 161-amino-acid chain; its full sequence is Nucleoside diphosphate kinase (161 aa).

ATP is bound by residues lysine 13, phenylalanine 61, arginine 89, threonine 95, arginine 106, and asparagine 116. Catalysis depends on histidine 119, which acts as the Pros-phosphohistidine intermediate.

Belongs to the NDK family. Mg(2+) is required as a cofactor.

The protein resides in the cytoplasm. The enzyme catalyses a 2'-deoxyribonucleoside 5'-diphosphate + ATP = a 2'-deoxyribonucleoside 5'-triphosphate + ADP. It carries out the reaction a ribonucleoside 5'-diphosphate + ATP = a ribonucleoside 5'-triphosphate + ADP. Its function is as follows. Major role in the synthesis of nucleoside triphosphates other than ATP. The ATP gamma phosphate is transferred to the NDP beta phosphate via a ping-pong mechanism, using a phosphorylated active-site intermediate. This is Nucleoside diphosphate kinase from Halobacterium salinarum (strain ATCC 29341 / DSM 671 / R1).